Reading from the N-terminus, the 89-residue chain is Small ribosomal subunit protein uS17 (89 aa).

The protein belongs to the universal ribosomal protein uS17 family. In terms of assembly, part of the 30S ribosomal subunit.

Its function is as follows. One of the primary rRNA binding proteins, it binds specifically to the 5'-end of 16S ribosomal RNA. This chain is Small ribosomal subunit protein uS17, found in Bacteroides fragilis (strain ATCC 25285 / DSM 2151 / CCUG 4856 / JCM 11019 / LMG 10263 / NCTC 9343 / Onslow / VPI 2553 / EN-2).